The chain runs to 236 residues: Purine nucleoside phosphorylase DeoD-type (236 aa).

Residue H4 coordinates a purine D-ribonucleoside. Phosphate-binding positions include G20, R24, R43, and 87-90 (RVGT). A purine D-ribonucleoside-binding positions include 179-181 (EME) and 203-204 (SD). The Proton donor role is filled by D204.

It belongs to the PNP/UDP phosphorylase family. In terms of assembly, homohexamer; trimer of homodimers.

It carries out the reaction a purine D-ribonucleoside + phosphate = a purine nucleobase + alpha-D-ribose 1-phosphate. The enzyme catalyses a purine 2'-deoxy-D-ribonucleoside + phosphate = a purine nucleobase + 2-deoxy-alpha-D-ribose 1-phosphate. Its function is as follows. Catalyzes the reversible phosphorolytic breakdown of the N-glycosidic bond in the beta-(deoxy)ribonucleoside molecules, with the formation of the corresponding free purine bases and pentose-1-phosphate. The protein is Purine nucleoside phosphorylase DeoD-type of Streptococcus pneumoniae (strain CGSP14).